Reading from the N-terminus, the 341-residue chain is Ferrochelatase (341 aa).

Positions 189 and 293 each coordinate Fe cation.

It belongs to the ferrochelatase family.

It is found in the cytoplasm. It carries out the reaction heme b + 2 H(+) = protoporphyrin IX + Fe(2+). Its pathway is porphyrin-containing compound metabolism; protoheme biosynthesis; protoheme from protoporphyrin-IX: step 1/1. In terms of biological role, catalyzes the ferrous insertion into protoporphyrin IX. This chain is Ferrochelatase, found in Pseudomonas fluorescens (strain SBW25).